We begin with the raw amino-acid sequence, 368 residues long: Protein trichome birefringence-like 43 (368 aa).

Residues 9-25 (GVVSVMVLMILVLLKQI) traverse the membrane as a helical; Signal-anchor for type II membrane protein segment. The short motif at 117-119 (GDS) is the GDS motif element. The DCXHWCLPGXXDXWN motif signature appears at 344–358 (DCSHWCLSGVPDSWN).

The protein belongs to the PC-esterase family. TBL subfamily.

The protein localises to the membrane. Its function is as follows. May act as a bridging protein that binds pectin and other cell wall polysaccharides. Probably involved in maintaining esterification of pectins. May be involved in the specific O-acetylation of cell wall polymers. This Arabidopsis thaliana (Mouse-ear cress) protein is Protein trichome birefringence-like 43 (TBL43).